Reading from the N-terminus, the 812-residue chain is 5-methyltetrahydropteroyltriglutamate--homocysteine methyltransferase 3, chloroplastic (812 aa).

The N-terminal 33 residues, 1–33, are a transit peptide targeting the chloroplast; it reads MGQLALQRLQPLASLPRRPPSLPPPSSATPSLP. The tract at residues 13 to 33 is disordered; the sequence is ASLPRRPPSLPPPSSATPSLP. Over residues 17–27 the composition is skewed to pro residues; it reads RRPPSLPPPSS. 5-methyltetrahydropteroyltri-L-glutamate-binding residues include Lys-66 and Asn-164. The tract at residues 430–456 is disordered; that stretch reads MRQASRRSSPRVTNAAVQQDVDAVKKS. Residues 485–487 and Glu-538 contribute to the L-homocysteine site; that span reads IGS. Residues 485 to 487 and Glu-538 each bind L-methionine; that span reads IGS. 5-methyltetrahydropteroyltri-L-glutamate is bound by residues Asp-543, Tyr-566, 569-570, and Trp-615; that span reads RC. Asp-653 is an L-homocysteine binding site. Residue Asp-653 participates in L-methionine binding. Residues His-695, Cys-697, His-706, Asp-710, and Glu-719 each coordinate Zn(2+). His-749 functions as the Proton donor in the catalytic mechanism. Residue Cys-781 coordinates Zn(2+).

It belongs to the vitamin-B12 independent methionine synthase family. Zn(2+) is required as a cofactor. Expressed in seeds.

The protein resides in the plastid. It is found in the chloroplast. The enzyme catalyses 5-methyltetrahydropteroyltri-L-glutamate + L-homocysteine = tetrahydropteroyltri-L-glutamate + L-methionine. The protein operates within amino-acid biosynthesis; L-methionine biosynthesis via de novo pathway; L-methionine from L-homocysteine (MetE route): step 1/1. In terms of biological role, catalyzes the transfer of a methyl group from 5-methyltetrahydrofolate to homocysteine resulting in methionine formation. The chain is 5-methyltetrahydropteroyltriglutamate--homocysteine methyltransferase 3, chloroplastic (MS3) from Arabidopsis thaliana (Mouse-ear cress).